The primary structure comprises 546 residues: Chaperonin GroEL (546 aa).

Residues 30–33 (TLGP), lysine 51, 87–91 (DGTTT), glycine 415, 479–481 (NAA), and aspartate 495 each bind ATP.

It belongs to the chaperonin (HSP60) family. As to quaternary structure, forms a cylinder of 14 subunits composed of two heptameric rings stacked back-to-back. Interacts with the co-chaperonin GroES.

It localises to the cytoplasm. It catalyses the reaction ATP + H2O + a folded polypeptide = ADP + phosphate + an unfolded polypeptide.. Together with its co-chaperonin GroES, plays an essential role in assisting protein folding. The GroEL-GroES system forms a nano-cage that allows encapsulation of the non-native substrate proteins and provides a physical environment optimized to promote and accelerate protein folding. The sequence is that of Chaperonin GroEL from Pseudomonas putida (strain ATCC 700007 / DSM 6899 / JCM 31910 / BCRC 17059 / LMG 24140 / F1).